We begin with the raw amino-acid sequence, 91 residues long: C-C motif chemokine 5 (91 aa).

The N-terminal stretch at 1-23 (MKVSAATFAILLATATFRAPASA) is a signal peptide. Cystine bridges form between C33-C57 and C34-C73.

It belongs to the intercrine beta (chemokine CC) family.

It is found in the secreted. Functionally, chemoattractant for blood monocytes, memory T-helper cells and eosinophils. Causes the release of histamine from basophils and activates eosinophils. May activate several chemokine receptors including CCR1, CCR3, CCR4 and CCR5. May also be an agonist of the G protein-coupled receptor GPR75. Together with GPR75, may play a role in neuron survival through activation of a downstream signaling pathway involving the PI3, Akt and MAP kinases. By activating GPR75 may also play a role in insulin secretion by islet cells. The sequence is that of C-C motif chemokine 5 (CCL5) from Canis lupus familiaris (Dog).